The following is a 64-amino-acid chain: Large ribosomal subunit protein bL35 (64 aa).

Residues 1–10 are compositionally biased toward polar residues; sequence MPKMKTNSAA. A disordered region spans residues 1-64; that stretch reads MPKMKTNSAA…SKNMKKLLGR (64 aa).

The protein belongs to the bacterial ribosomal protein bL35 family.

The chain is Large ribosomal subunit protein bL35 from Bifidobacterium adolescentis (strain ATCC 15703 / DSM 20083 / NCTC 11814 / E194a).